We begin with the raw amino-acid sequence, 161 residues long: 3-isopropylmalate dehydratase small subunit (161 aa).

This sequence belongs to the LeuD family. LeuD type 2 subfamily. As to quaternary structure, heterodimer of LeuC and LeuD.

The catalysed reaction is (2R,3S)-3-isopropylmalate = (2S)-2-isopropylmalate. Its pathway is amino-acid biosynthesis; L-leucine biosynthesis; L-leucine from 3-methyl-2-oxobutanoate: step 2/4. Its function is as follows. Catalyzes the isomerization between 2-isopropylmalate and 3-isopropylmalate, via the formation of 2-isopropylmaleate. The chain is 3-isopropylmalate dehydratase small subunit from Clostridium botulinum (strain Eklund 17B / Type B).